The sequence spans 202 residues: Xanthine phosphoribosyltransferase (202 aa).

The xanthine site is built by Leu20 and Asn27. Residue 128–132 (ANGEA) coordinates 5-phospho-alpha-D-ribose 1-diphosphate. Xanthine is bound at residue Lys156.

Belongs to the purine/pyrimidine phosphoribosyltransferase family. Xpt subfamily. Homodimer.

The protein localises to the cytoplasm. It carries out the reaction XMP + diphosphate = xanthine + 5-phospho-alpha-D-ribose 1-diphosphate. The protein operates within purine metabolism; XMP biosynthesis via salvage pathway; XMP from xanthine: step 1/1. Converts the preformed base xanthine, a product of nucleic acid breakdown, to xanthosine 5'-monophosphate (XMP), so it can be reused for RNA or DNA synthesis. This is Xanthine phosphoribosyltransferase from Alkaliphilus metalliredigens (strain QYMF).